Reading from the N-terminus, the 166-residue chain is PTS system glucose-specific EIIA component (166 aa).

One can recognise a PTS EIIA type-1 domain in the interval 34-138 (DPVFAQKMMG…SVISPIIITN (105 aa)). Zn(2+)-binding residues include H71 and H86. Catalysis depends on H86, which acts as the Tele-phosphohistidine intermediate; for EIIA activity. A Phosphohistidine; by HPr modification is found at H86.

In terms of assembly, heterodimer with glycerol kinase (glpk). The cofactor is Zn(2+).

Its subcellular location is the cytoplasm. Functionally, the phosphoenolpyruvate-dependent sugar phosphotransferase system (sugar PTS), a major carbohydrate active transport system, catalyzes the phosphorylation of incoming sugar substrates concomitantly with their translocation across the cell membrane. The enzyme II complex composed of PtsG and Crr is involved in glucose transport. The polypeptide is PTS system glucose-specific EIIA component (crr) (Staphylococcus aureus (strain Mu50 / ATCC 700699)).